A 273-amino-acid polypeptide reads, in one-letter code: MQQAQQKPFIPTIPAYQALKLDEDLINKCNYSIEQLMEIAGTAVAQATTHYIESTSSVSKAGVLVVCGPGNNGGDGLVAARHLSSGSMSSATVRVWLPKEPSSSVNKRMLSIAKHAGVVFIKDTNEEALHAILEFINSCESFYLVDAIFGFSFHGGPIKPPYDTVINTLLQMQTSMAIGPKTRIVSVDVPSGWSVDAQEWGLNTDKELIPDGLLRPDALISLTVPKNCSLWLPPGTAHYLGGNFLTPLLAMEYDVQEIQHYWSGVSSLFVVLS.

One can recognise a YjeF N-terminal domain in the interval 18 to 257; sequence ALKLDEDLIN…LLAMEYDVQE (240 aa). 71 to 75 contributes to the (6S)-NADPHX binding site; it reads NNGGD. Positions 72 and 146 each coordinate K(+). Residues 150-157, tyrosine 162, and aspartate 188 each bind (6S)-NADPHX; that span reads GFSFHGGP. Residue serine 191 participates in K(+) binding.

It belongs to the NnrE/AIBP family. The cofactor is K(+).

It carries out the reaction (6R)-NADHX = (6S)-NADHX. It catalyses the reaction (6R)-NADPHX = (6S)-NADPHX. Its function is as follows. Catalyzes the epimerization of the S- and R-forms of NAD(P)HX, a damaged form of NAD(P)H that is a result of enzymatic or heat-dependent hydration. This is a prerequisite for the S-specific NAD(P)H-hydrate dehydratase to allow the repair of both epimers of NAD(P)HX. The protein is NAD(P)H-hydrate epimerase of Giardia intestinalis (strain ATCC 50803 / WB clone C6) (Giardia lamblia).